Reading from the N-terminus, the 176-residue chain is Cytochrome b (176 aa).

3 consecutive transmembrane segments (helical) span residues 33-53 (FGSLLGLCLLIQILTGLFLAM), 77-98 (WLIRYMHANGASLFFICLFLHV), and 113-133 (WNIGVILLFAVMATAFMGYVL). H83 and H97 together coordinate heme b.

Belongs to the cytochrome b family. The cytochrome bc1 complex contains 11 subunits: 3 respiratory subunits (MT-CYB, CYC1 and UQCRFS1), 2 core proteins (UQCRC1 and UQCRC2) and 6 low-molecular weight proteins (UQCRH/QCR6, UQCRB/QCR7, UQCRQ/QCR8, UQCR10/QCR9, UQCR11/QCR10 and a cleavage product of UQCRFS1). This cytochrome bc1 complex then forms a dimer. The cofactor is heme b.

Its subcellular location is the mitochondrion inner membrane. Functionally, component of the ubiquinol-cytochrome c reductase complex (complex III or cytochrome b-c1 complex) that is part of the mitochondrial respiratory chain. The b-c1 complex mediates electron transfer from ubiquinol to cytochrome c. Contributes to the generation of a proton gradient across the mitochondrial membrane that is then used for ATP synthesis. This is Cytochrome b (MT-CYB) from Sciurus carolinensis (Eastern gray squirrel).